We begin with the raw amino-acid sequence, 203 residues long: GTP cyclohydrolase 1 (203 aa).

3 residues coordinate Zn(2+): Cys87, His90, and Cys158.

This sequence belongs to the GTP cyclohydrolase I family. Toroid-shaped homodecamer, composed of two pentamers of five dimers.

It catalyses the reaction GTP + H2O = 7,8-dihydroneopterin 3'-triphosphate + formate + H(+). It functions in the pathway cofactor biosynthesis; 7,8-dihydroneopterin triphosphate biosynthesis; 7,8-dihydroneopterin triphosphate from GTP: step 1/1. This chain is GTP cyclohydrolase 1, found in Xylella fastidiosa (strain 9a5c).